A 130-amino-acid chain; its full sequence is Holo-[acyl-carrier-protein] synthase (130 aa).

2 residues coordinate Mg(2+): D9 and E58.

This sequence belongs to the P-Pant transferase superfamily. AcpS family. The cofactor is Mg(2+).

The protein localises to the cytoplasm. It catalyses the reaction apo-[ACP] + CoA = holo-[ACP] + adenosine 3',5'-bisphosphate + H(+). Its function is as follows. Transfers the 4'-phosphopantetheine moiety from coenzyme A to a Ser of acyl-carrier-protein. The chain is Holo-[acyl-carrier-protein] synthase from Mycobacterium sp. (strain JLS).